An 880-amino-acid polypeptide reads, in one-letter code: Alanine--tRNA ligase (880 aa).

Residues H568, H572, C670, and H674 each contribute to the Zn(2+) site.

This sequence belongs to the class-II aminoacyl-tRNA synthetase family. The cofactor is Zn(2+).

Its subcellular location is the cytoplasm. The catalysed reaction is tRNA(Ala) + L-alanine + ATP = L-alanyl-tRNA(Ala) + AMP + diphosphate. Functionally, catalyzes the attachment of alanine to tRNA(Ala) in a two-step reaction: alanine is first activated by ATP to form Ala-AMP and then transferred to the acceptor end of tRNA(Ala). Also edits incorrectly charged Ser-tRNA(Ala) and Gly-tRNA(Ala) via its editing domain. The sequence is that of Alanine--tRNA ligase from Enterococcus faecalis (strain ATCC 700802 / V583).